A 330-amino-acid chain; its full sequence is Anthranilate phosphoribosyltransferase (330 aa).

Residues glycine 79, 82–83, threonine 87, 89–92, 107–115, and serine 119 each bind 5-phospho-alpha-D-ribose 1-diphosphate; these read GD, NIST, and KHGNYGVSS. Glycine 79 serves as a coordination point for anthranilate. A Mg(2+)-binding site is contributed by serine 91. Asparagine 110 provides a ligand contact to anthranilate. Arginine 165 contacts anthranilate. Mg(2+) contacts are provided by aspartate 223 and glutamate 224.

Belongs to the anthranilate phosphoribosyltransferase family. In terms of assembly, homodimer. Mg(2+) serves as cofactor.

It carries out the reaction N-(5-phospho-beta-D-ribosyl)anthranilate + diphosphate = 5-phospho-alpha-D-ribose 1-diphosphate + anthranilate. The protein operates within amino-acid biosynthesis; L-tryptophan biosynthesis; L-tryptophan from chorismate: step 2/5. Functionally, catalyzes the transfer of the phosphoribosyl group of 5-phosphorylribose-1-pyrophosphate (PRPP) to anthranilate to yield N-(5'-phosphoribosyl)-anthranilate (PRA). The sequence is that of Anthranilate phosphoribosyltransferase from Flavobacterium johnsoniae (strain ATCC 17061 / DSM 2064 / JCM 8514 / BCRC 14874 / CCUG 350202 / NBRC 14942 / NCIMB 11054 / UW101) (Cytophaga johnsonae).